Consider the following 186-residue polypeptide: Threonylcarbamoyl-AMP synthase (186 aa).

Positions 6–186 (GFRLRLAANA…FDAMSGRRIR (181 aa)) constitute a YrdC-like domain.

This sequence belongs to the SUA5 family. TsaC subfamily.

The protein resides in the cytoplasm. The catalysed reaction is L-threonine + hydrogencarbonate + ATP = L-threonylcarbamoyladenylate + diphosphate + H2O. Its function is as follows. Required for the formation of a threonylcarbamoyl group on adenosine at position 37 (t(6)A37) in tRNAs that read codons beginning with adenine. Catalyzes the conversion of L-threonine, HCO(3)(-)/CO(2) and ATP to give threonylcarbamoyl-AMP (TC-AMP) as the acyladenylate intermediate, with the release of diphosphate. This Methylococcus capsulatus (strain ATCC 33009 / NCIMB 11132 / Bath) protein is Threonylcarbamoyl-AMP synthase.